Here is a 284-residue protein sequence, read N- to C-terminus: Elongation factor Ts (284 aa).

Residues 80 to 83 (TDFV) are involved in Mg(2+) ion dislocation from EF-Tu.

The protein belongs to the EF-Ts family.

The protein resides in the cytoplasm. In terms of biological role, associates with the EF-Tu.GDP complex and induces the exchange of GDP to GTP. It remains bound to the aminoacyl-tRNA.EF-Tu.GTP complex up to the GTP hydrolysis stage on the ribosome. In Neisseria meningitidis serogroup A / serotype 4A (strain DSM 15465 / Z2491), this protein is Elongation factor Ts.